The chain runs to 155 residues: Regulatory protein RecX (155 aa).

This sequence belongs to the RecX family.

It is found in the cytoplasm. Modulates RecA activity. This is Regulatory protein RecX from Pseudomonas entomophila (strain L48).